The chain runs to 147 residues: Large ribosomal subunit protein bL9 (147 aa).

Belongs to the bacterial ribosomal protein bL9 family.

Functionally, binds to the 23S rRNA. This Geotalea uraniireducens (strain Rf4) (Geobacter uraniireducens) protein is Large ribosomal subunit protein bL9.